A 398-amino-acid chain; its full sequence is Phosphoglycerate kinase (398 aa).

Residues 21–23 (DFN), R36, 59–62 (HLGR), R119, and R157 each bind substrate. ATP-binding positions include K208, G296, E327, and 354-357 (GGDS).

The protein belongs to the phosphoglycerate kinase family. As to quaternary structure, monomer.

The protein localises to the cytoplasm. It carries out the reaction (2R)-3-phosphoglycerate + ATP = (2R)-3-phospho-glyceroyl phosphate + ADP. It functions in the pathway carbohydrate degradation; glycolysis; pyruvate from D-glyceraldehyde 3-phosphate: step 2/5. In Streptococcus pyogenes serotype M1, this protein is Phosphoglycerate kinase (pgk).